We begin with the raw amino-acid sequence, 164 residues long: Phosphopantetheine adenylyltransferase (164 aa).

Thr-9 is a substrate binding site. ATP is bound by residues 9 to 10 (TF) and His-17. Substrate-binding residues include Lys-41, Leu-78, and Arg-92. ATP-binding positions include 93 to 95 (GLR), Glu-103, and 128 to 134 (RQAIASK).

Belongs to the bacterial CoaD family. Homohexamer. The cofactor is Mg(2+).

Its subcellular location is the cytoplasm. It carries out the reaction (R)-4'-phosphopantetheine + ATP + H(+) = 3'-dephospho-CoA + diphosphate. Its pathway is cofactor biosynthesis; coenzyme A biosynthesis; CoA from (R)-pantothenate: step 4/5. In terms of biological role, reversibly transfers an adenylyl group from ATP to 4'-phosphopantetheine, yielding dephospho-CoA (dPCoA) and pyrophosphate. The sequence is that of Phosphopantetheine adenylyltransferase from Paracoccus denitrificans (strain Pd 1222).